The primary structure comprises 428 residues: Folylpolyglutamate synthase (428 aa).

49–52 provides a ligand contact to ATP; that stretch reads GKGS. Position 73 (Ser73) interacts with Mg(2+). (6R)-5,10-methylenetetrahydrofolyl-(gamma-L-Glu)n is bound by residues Phe75 and Arg82. Positions 143 and 170 each coordinate Mg(2+). An N6-carboxylysine modification is found at Lys185. Residues Asn264, Arg300, and 313–316 contribute to the ATP site; that span reads DGAH. Ser417 is a (6R)-5,10-methylenetetrahydrofolyl-(gamma-L-Glu)n binding site.

Belongs to the folylpolyglutamate synthase family. In terms of assembly, monomer. Mg(2+) serves as cofactor.

The catalysed reaction is (6S)-5,6,7,8-tetrahydrofolyl-(gamma-L-Glu)(n) + L-glutamate + ATP = (6S)-5,6,7,8-tetrahydrofolyl-(gamma-L-Glu)(n+1) + ADP + phosphate + H(+). The enzyme catalyses (6R)-5,10-methylenetetrahydrofolyl-(gamma-L-Glu)(n) + L-glutamate + ATP = (6R)-5,10-methylenetetrahydrofolyl-(gamma-L-Glu)(n+1) + ADP + phosphate + H(+). It carries out the reaction 10-formyltetrahydrofolyl-(gamma-L-Glu)(n) + L-glutamate + ATP = 10-formyltetrahydrofolyl-(gamma-L-Glu)(n+1) + ADP + phosphate + H(+). Its activity is regulated as follows. Competitively inhibited by adenosine 5'-(3-thio)triphosphate and beta,gamma-methylene-ATP. Involved in the conversion of folates to polyglutamate derivatives, and likely functions in the retention of cellular folate pools. Catalyzes successive MgATP-dependent additions of glutamate to a pteroylmonoglutamate substrate, with a high preference for 5,10-methylenetetrahydrofolate (mTHF). Thus, metabolizes mTHF to the tetraglutamate derivative, but longer glutamate chain length products are not observed. Tetrahydrofolate (H4PteGlu) and 10-formyl-H4PteGlu are poorer folate substrates. In contrast to E.coli FolC, this enzyme does not display dihydrofolate synthase activity. The polypeptide is Folylpolyglutamate synthase (Lacticaseibacillus casei (Lactobacillus casei)).